The following is a 445-amino-acid chain: Phosphoglucosamine mutase (445 aa).

Catalysis depends on Ser102, which acts as the Phosphoserine intermediate. Positions 102, 241, 243, and 245 each coordinate Mg(2+). Ser102 is modified (phosphoserine).

The protein belongs to the phosphohexose mutase family. The cofactor is Mg(2+). Activated by phosphorylation.

It catalyses the reaction alpha-D-glucosamine 1-phosphate = D-glucosamine 6-phosphate. In terms of biological role, catalyzes the conversion of glucosamine-6-phosphate to glucosamine-1-phosphate. The polypeptide is Phosphoglucosamine mutase (Aliivibrio salmonicida (strain LFI1238) (Vibrio salmonicida (strain LFI1238))).